A 396-amino-acid chain; its full sequence is Phosphopentomutase (396 aa).

Mn(2+) is bound by residues Asp-13, Asp-288, His-293, Asp-329, His-330, and His-341.

It belongs to the phosphopentomutase family. Requires Mn(2+) as cofactor.

It is found in the cytoplasm. It carries out the reaction 2-deoxy-alpha-D-ribose 1-phosphate = 2-deoxy-D-ribose 5-phosphate. It catalyses the reaction alpha-D-ribose 1-phosphate = D-ribose 5-phosphate. It functions in the pathway carbohydrate degradation; 2-deoxy-D-ribose 1-phosphate degradation; D-glyceraldehyde 3-phosphate and acetaldehyde from 2-deoxy-alpha-D-ribose 1-phosphate: step 1/2. Functionally, isomerase that catalyzes the conversion of deoxy-ribose 1-phosphate (dRib-1-P) and ribose 1-phosphate (Rib-1-P) to deoxy-ribose 5-phosphate (dRib-5-P) and ribose 5-phosphate (Rib-5-P), respectively. This Clostridium perfringens (strain SM101 / Type A) protein is Phosphopentomutase.